We begin with the raw amino-acid sequence, 171 residues long: Co-chaperone protein HscB homolog (171 aa).

A J domain is found at 2–74 (NHFELFRLPF…ISRAEYMLSE (73 aa)).

It belongs to the HscB family. As to quaternary structure, interacts with HscA and stimulates its ATPase activity.

Co-chaperone involved in the maturation of iron-sulfur cluster-containing proteins. Seems to help targeting proteins to be folded toward HscA. This is Co-chaperone protein HscB homolog from Photobacterium profundum (strain SS9).